The following is a 338-amino-acid chain: Inorganic pyrophosphatase (338 aa).

Arginine 129 provides a ligand contact to diphosphate. Mg(2+) contacts are provided by aspartate 166, aspartate 171, and aspartate 203.

It belongs to the PPase family. In terms of assembly, component of the NURF complex composed of Caf1-55, E(bx), Nurf-38 and Iswi. Mg(2+) serves as cofactor.

It localises to the cytoplasm. The protein resides in the nucleus. The enzyme catalyses diphosphate + H2O = 2 phosphate + H(+). In terms of biological role, component of NURF (nucleosome remodeling factor), a complex which catalyzes ATP-dependent nucleosome sliding and facilitates transcription of chromatin. NURF is required for homeotic gene expression, proper larval blood cell development, normal male X chromosome morphology, ecdysteroid signaling and metamorphosis. Inorganic pyrophosphatase (PPase), hydrolyzes inorganic pyrophosphate to inorganic phosphate, essential for driving critical biosynthetic reactions including transcription, replication, and DNA repair. The sequence is that of Inorganic pyrophosphatase (Nurf-38) from Drosophila melanogaster (Fruit fly).